The chain runs to 359 residues: Adenosine deaminase (359 aa).

Zn(2+)-binding residues include H15 and H17. The substrate site is built by H17, D19, and G184. H213 contributes to the Zn(2+) binding site. E216 serves as the catalytic Proton donor. D295 serves as a coordination point for Zn(2+). D296 serves as a coordination point for substrate.

It belongs to the metallo-dependent hydrolases superfamily. Adenosine and AMP deaminases family. The cofactor is Zn(2+).

The protein resides in the cell membrane. The protein localises to the cell junction. It is found in the cytoplasmic vesicle lumen. It localises to the cytoplasm. Its subcellular location is the lysosome. The enzyme catalyses adenosine + H2O + H(+) = inosine + NH4(+). It catalyses the reaction 2'-deoxyadenosine + H2O + H(+) = 2'-deoxyinosine + NH4(+). Catalyzes the hydrolytic deamination of adenosine and 2-deoxyadenosine. Plays an important role in purine metabolism and in adenosine homeostasis. Modulates signaling by extracellular adenosine, and so contributes indirectly to cellular signaling events. May act as a positive regulator of T-cell coactivation. In Danio rerio (Zebrafish), this protein is Adenosine deaminase (ada).